A 269-amino-acid polypeptide reads, in one-letter code: SF-assemblin (269 aa).

The segment at 1 to 23 is disordered; the sequence is MSISPGRSFSPMRASGLTGITSA. The nonhelical region stretch occupies residues 1–24; that stretch reads MSISPGRSFSPMRASGLTGITSAG. The tract at residues 25-269 is rod; it reads PTAKLEHVSE…LQEGLKLVST (245 aa). Residues 98–144 adopt a coiled-coil conformation; sequence AERSAAQHVDMQNSLKQAVDSLSNRLQDLHSLVREEREQRRNDIEHL.

This sequence belongs to the SF-assemblin family.

It is found in the cytoplasm. It localises to the cytoskeleton. Functionally, major component of the striated microtubule-associated fibers (SMAFs; system-I-fibers). In Chlamydomonas moewusii (Chlamydomonas eugametos), this protein is SF-assemblin.